A 336-amino-acid polypeptide reads, in one-letter code: NADH-quinone oxidoreductase subunit H (336 aa).

The next 8 helical transmembrane spans lie at 17-37, 85-105, 116-136, 154-174, 190-210, 247-267, 274-294, and 309-329; these read WFII…TYAI, ALFT…LAVM, LGIG…GVIT, AAQM…IVLL, VWNI…AQAE, VYMF…WLPI, IPGI…QFWI, and FAWK…AVVV.

Belongs to the complex I subunit 1 family. As to quaternary structure, NDH-1 is composed of 14 different subunits. Subunits NuoA, H, J, K, L, M, N constitute the membrane sector of the complex.

It is found in the cell membrane. The enzyme catalyses a quinone + NADH + 5 H(+)(in) = a quinol + NAD(+) + 4 H(+)(out). In terms of biological role, NDH-1 shuttles electrons from NADH, via FMN and iron-sulfur (Fe-S) centers, to quinones in the respiratory chain. The immediate electron acceptor for the enzyme in this species is believed to be ubiquinone. Couples the redox reaction to proton translocation (for every two electrons transferred, four hydrogen ions are translocated across the cytoplasmic membrane), and thus conserves the redox energy in a proton gradient. This subunit may bind ubiquinone. This Brevibacillus brevis (strain 47 / JCM 6285 / NBRC 100599) protein is NADH-quinone oxidoreductase subunit H.